The primary structure comprises 542 residues: MAKDIKFSEDARRAMLRGVDQLANAVKVTLGPKGRNVVLEKKFGSPLITNDGVTIAKEIELEDPFENMGAKLVSEVASKTNDVAGDGTTTATVLAQAMIQEGLKNVTAGANPVGVRRGIEKAVATAIEELKAISKPIESKESIAQVAAISSGDEEVGKLIAEAMERVGNDGVITIEESKGFATELDVVEGMQFDRGYTSPYMVTDSDKMEAVLEKPYILITDKKINNIQEILPVLEQVVQQGRPMLIIAEDVEGEAQATLVLNKLRGTFNVVAVKAPGFGDRRKAMLEDIAILTGGQVITEDLGLELKTATVDQLGTANKVVVTKDDTTIVEGAGDSTQISARVNQIRAQMEETTSEFDREKLQERLAKLAGGVAVVKVGAATETELKERKLRIEDALNSTRAAVEEGIVAGGGTALVSIYNKVAALEAEGDVETGINIVLRSLEEPVRQIAHNAGLEGSVIVERLKHEAVGVGFNAANGEWVNMIDAGIVDPTKVTRSALQNASSVAALLLTTEAVVADQPDENGPAAVPDMGMGGMGGMM.

Residues 29–32 (TLGP), 86–90 (DGTTT), G413, 476–478 (NAA), and D492 each bind ATP.

The protein belongs to the chaperonin (HSP60) family. Forms a cylinder of 14 subunits composed of two heptameric rings stacked back-to-back. Interacts with the co-chaperonin GroES.

It localises to the cytoplasm. It carries out the reaction ATP + H2O + a folded polypeptide = ADP + phosphate + an unfolded polypeptide.. Its function is as follows. Together with its co-chaperonin GroES, plays an essential role in assisting protein folding. The GroEL-GroES system forms a nano-cage that allows encapsulation of the non-native substrate proteins and provides a physical environment optimized to promote and accelerate protein folding. This is Chaperonin GroEL from Listeria welshimeri serovar 6b (strain ATCC 35897 / DSM 20650 / CCUG 15529 / CIP 8149 / NCTC 11857 / SLCC 5334 / V8).